The primary structure comprises 480 residues: NADH-quinone oxidoreductase subunit N (480 aa).

13 helical membrane passes run 10–30 (FISI…ILIE), 40–60 (WSSL…WGGI), 80–100 (FFTV…TAFF), 117–137 (AVFG…FLGI), 166–186 (LMGS…YGAI), 208–228 (VLFF…AALV), 246–266 (TAFM…RLFF), 276–296 (WNQV…FVAL), 304–324 (FFAY…VIGN), 330–350 (ALTF…AVLA), 374–394 (LASL…TAGF), 409–431 (YYGL…LRII), and 452–472 (IVGT…APFL).

The protein belongs to the complex I subunit 2 family. NDH-1 is composed of 14 different subunits. Subunits NuoA, H, J, K, L, M, N constitute the membrane sector of the complex.

The protein resides in the cell inner membrane. It catalyses the reaction a quinone + NADH + 5 H(+)(in) = a quinol + NAD(+) + 4 H(+)(out). In terms of biological role, NDH-1 shuttles electrons from NADH, via FMN and iron-sulfur (Fe-S) centers, to quinones in the respiratory chain. The immediate electron acceptor for the enzyme in this species is believed to be ubiquinone. Couples the redox reaction to proton translocation (for every two electrons transferred, four hydrogen ions are translocated across the cytoplasmic membrane), and thus conserves the redox energy in a proton gradient. The sequence is that of NADH-quinone oxidoreductase subunit N from Protochlamydia amoebophila (strain UWE25).